A 475-amino-acid polypeptide reads, in one-letter code: MDYLPVFLNIKQRDCLVVGGGEIAVRKIRLLLRAHARIHVVSPAISEELSNLLLQSPVITHTAESFRPDHLQDRALAIAATNDHEVNRAVSAAARKAGIPVNVVDNPDLCTFIMPSILDRSPIIVAVSSGGTSPILARLLRSRLEALIPSAYGRLAEYAARFRDKVRQRFIHQENRRFFWERMLQGPFAEMVFAGRDQAAQDYLSEALENSTDQFPTGEVYLVGAGPGDPDLLTFRAMRLMQQADVVIYDRLVSPAILDMVRQDATRIYVGKVRNQHTLPQTSINELLVKLAQEGKHVLRLKGGDPFIFGRGGEEIETLSQHHIPFQVVPGITAASGVASYAGIPLTHRDHAQSCVFVTGHLKDNTIQLDWPALARPNQTIVVYMGLLGVTELCRQLIAHGLQATTPAAIVQQGTTPNQRVLTGTLETLPDIIQQNPLKPPTLIIVGNVVKLHQKLAWFNSTSEPMGTSSGPGYP.

Residues 1-204 (MDYLPVFLNI…GRDQAAQDYL (204 aa)) are precorrin-2 dehydrogenase /sirohydrochlorin ferrochelatase. Residues 22 to 23 (EI) and 43 to 44 (PA) each bind NAD(+). Ser129 carries the post-translational modification Phosphoserine. Residues 218–475 (GEVYLVGAGP…MGTSSGPGYP (258 aa)) form a uroporphyrinogen-III C-methyltransferase region. Pro227 contacts S-adenosyl-L-methionine. Asp250 functions as the Proton acceptor in the catalytic mechanism. Lys272 (proton donor) is an active-site residue. Residues 303 to 305 (GGD), Ile308, 333 to 334 (TA), Met385, and Gly414 contribute to the S-adenosyl-L-methionine site.

It in the N-terminal section; belongs to the precorrin-2 dehydrogenase / sirohydrochlorin ferrochelatase family. The protein in the C-terminal section; belongs to the precorrin methyltransferase family.

It carries out the reaction uroporphyrinogen III + 2 S-adenosyl-L-methionine = precorrin-2 + 2 S-adenosyl-L-homocysteine + H(+). The enzyme catalyses precorrin-2 + NAD(+) = sirohydrochlorin + NADH + 2 H(+). It catalyses the reaction siroheme + 2 H(+) = sirohydrochlorin + Fe(2+). It functions in the pathway cofactor biosynthesis; adenosylcobalamin biosynthesis; precorrin-2 from uroporphyrinogen III: step 1/1. The protein operates within cofactor biosynthesis; adenosylcobalamin biosynthesis; sirohydrochlorin from precorrin-2: step 1/1. Its pathway is porphyrin-containing compound metabolism; siroheme biosynthesis; precorrin-2 from uroporphyrinogen III: step 1/1. It participates in porphyrin-containing compound metabolism; siroheme biosynthesis; siroheme from sirohydrochlorin: step 1/1. It functions in the pathway porphyrin-containing compound metabolism; siroheme biosynthesis; sirohydrochlorin from precorrin-2: step 1/1. Its function is as follows. Multifunctional enzyme that catalyzes the SAM-dependent methylations of uroporphyrinogen III at position C-2 and C-7 to form precorrin-2 via precorrin-1. Then it catalyzes the NAD-dependent ring dehydrogenation of precorrin-2 to yield sirohydrochlorin. Finally, it catalyzes the ferrochelation of sirohydrochlorin to yield siroheme. This is Siroheme synthase from Nitrosomonas europaea (strain ATCC 19718 / CIP 103999 / KCTC 2705 / NBRC 14298).